A 687-amino-acid polypeptide reads, in one-letter code: Polyphosphate kinase (687 aa).

Asparagine 45 provides a ligand contact to ATP. Residues arginine 375 and arginine 405 each coordinate Mg(2+). Catalysis depends on histidine 435, which acts as the Phosphohistidine intermediate. ATP-binding residues include tyrosine 472, arginine 568, and histidine 596.

This sequence belongs to the polyphosphate kinase 1 (PPK1) family. It depends on Mg(2+) as a cofactor. In terms of processing, an intermediate of this reaction is the autophosphorylated ppk in which a phosphate is covalently linked to a histidine residue through a N-P bond.

It catalyses the reaction [phosphate](n) + ATP = [phosphate](n+1) + ADP. In terms of biological role, catalyzes the reversible transfer of the terminal phosphate of ATP to form a long-chain polyphosphate (polyP). The sequence is that of Polyphosphate kinase from Burkholderia vietnamiensis (strain G4 / LMG 22486) (Burkholderia cepacia (strain R1808)).